Consider the following 521-residue polypeptide: Ribonuclease Y (521 aa).

Residues 5–25 (LLLILTAVIMLIVGFAVGAIL) traverse the membrane as a helical segment. Residues 77–107 (ELKDRRGEVQKQENRLIQREETMDRKDATLD) are disordered. The KH domain maps to 211–271 (TVTVVTLPND…IRREIARMTL (61 aa)). Residues 337 to 430 (VLNHSIEVAK…VAASDAISAA (94 aa)) enclose the HD domain.

The protein belongs to the RNase Y family.

Its subcellular location is the cell membrane. Functionally, endoribonuclease that initiates mRNA decay. In Latilactobacillus sakei subsp. sakei (strain 23K) (Lactobacillus sakei subsp. sakei), this protein is Ribonuclease Y.